A 160-amino-acid polypeptide reads, in one-letter code: Small ribosomal subunit protein uS7B (160 aa).

This sequence belongs to the universal ribosomal protein uS7 family. Part of the 30S ribosomal subunit. Contacts proteins S9 and S11.

One of the primary rRNA binding proteins, it binds directly to 16S rRNA where it nucleates assembly of the head domain of the 30S subunit. Is located at the subunit interface close to the decoding center, probably blocks exit of the E-site tRNA. This Aquifex aeolicus (strain VF5) protein is Small ribosomal subunit protein uS7B.